Here is a 150-residue protein sequence, read N- to C-terminus: Peptidoglycan-associated lipoprotein (150 aa).

The first 19 residues, 1–19, serve as a signal peptide directing secretion; the sequence is MKKLTKVLLVAGSVAVLAA. A lipid anchor (N-palmitoyl cysteine) is attached at cysteine 20. Cysteine 20 carries S-diacylglycerol cysteine lipidation. The OmpA-like domain maps to 37–150; the sequence is SVQDLQQRYN…SKNRRAVLAY (114 aa).

The protein belongs to the Pal lipoprotein family. In terms of assembly, the Tol-Pal system is composed of five core proteins: the inner membrane proteins TolA, TolQ and TolR, the periplasmic protein TolB and the outer membrane protein Pal. They form a network linking the inner and outer membranes and the peptidoglycan layer.

The protein localises to the cell outer membrane. In terms of biological role, part of the Tol-Pal system, which plays a role in outer membrane invagination during cell division and is important for maintaining outer membrane integrity. The protein is Peptidoglycan-associated lipoprotein of Pasteurella multocida (strain Pm70).